The primary structure comprises 265 residues: Small ribosomal subunit protein uS2 (265 aa).

It belongs to the universal ribosomal protein uS2 family.

This Ligilactobacillus salivarius (strain UCC118) (Lactobacillus salivarius) protein is Small ribosomal subunit protein uS2.